The sequence spans 841 residues: DNA ligase (841 aa).

Residues 54–58 (DAEYD), 103–104 (SL), and glutamate 143 contribute to the NAD(+) site. Lysine 145 functions as the N6-AMP-lysine intermediate in the catalytic mechanism. NAD(+) is bound by residues arginine 166, glutamate 203, lysine 321, and lysine 345. Zn(2+) is bound by residues cysteine 471, cysteine 474, cysteine 489, and cysteine 495. The segment at 554–575 (KTVAESDQMPSEGSSVGASGKH) is disordered. Positions 561–570 (QMPSEGSSVG) are enriched in polar residues. One can recognise a BRCT domain in the interval 764–841 (GINKAVAGKT…SEAELLTLLG (78 aa)).

Belongs to the NAD-dependent DNA ligase family. LigA subfamily. Mg(2+) serves as cofactor. Mn(2+) is required as a cofactor.

It carries out the reaction NAD(+) + (deoxyribonucleotide)n-3'-hydroxyl + 5'-phospho-(deoxyribonucleotide)m = (deoxyribonucleotide)n+m + AMP + beta-nicotinamide D-nucleotide.. Functionally, DNA ligase that catalyzes the formation of phosphodiester linkages between 5'-phosphoryl and 3'-hydroxyl groups in double-stranded DNA using NAD as a coenzyme and as the energy source for the reaction. It is essential for DNA replication and repair of damaged DNA. The protein is DNA ligase of Neisseria meningitidis serogroup C (strain 053442).